Reading from the N-terminus, the 284-residue chain is MPSLRDLRRRIKSIKSTQQITKAMKAVSAAKMRKAQEAVLSARPYSKRLKSVLGRVAVASGGVSHPLLAVREPKKVAYIVITADRGLCGGFNSNVIRRATQEMREQSAELSLITVGRKSRDFFRRRGYNIAQQYVGLGEEIKYGTAKEIASFVIEKYSAGEYDVVYLVYSQFVNILVQKPVVVKLLPAEPPEEEGEARKVEYIFEPSAAAVLTELLPKYIENAIYQGLLESKAGEHSARMTAMDNATKNASDMIDRLTLSMNRARQAQITKEISEIVGGAAALE.

It belongs to the ATPase gamma chain family. In terms of assembly, F-type ATPases have 2 components, CF(1) - the catalytic core - and CF(0) - the membrane proton channel. CF(1) has five subunits: alpha(3), beta(3), gamma(1), delta(1), epsilon(1). CF(0) has three main subunits: a, b and c.

It is found in the cell membrane. Its function is as follows. Produces ATP from ADP in the presence of a proton gradient across the membrane. The gamma chain is believed to be important in regulating ATPase activity and the flow of protons through the CF(0) complex. This is ATP synthase gamma chain from Pelotomaculum thermopropionicum (strain DSM 13744 / JCM 10971 / SI).